Reading from the N-terminus, the 387-residue chain is TSC22 domain family protein 4 (387 aa).

Disordered regions lie at residues 1 to 85 (MSGG…GEPY) and 135 to 232 (ISTP…RRDG). Residues 28–51 (SDPPAPPAPAGPPPRLPNGEPNPD) show a composition bias toward pro residues. T57 carries the phosphothreonine modification. Residues S62 and S165 each carry the phosphoserine modification. T183 carries the phosphothreonine modification. Phosphoserine is present on residues S187 and S189. A Phosphothreonine modification is found at T223. Residues S254, S258, and S271 each carry the phosphoserine modification. Residues 336 to 357 (LKEQIRDLAERNAALEQENGLL) form a leucine-zipper region. S362 carries the phosphoserine modification. The segment at 368-387 (QLPSSGLPRLGPSAPNGPSI) is disordered.

This sequence belongs to the TSC-22/Dip/Bun family. As to quaternary structure, forms a homodimer or heterodimer. Forms a heterodimer with TSC22D1 isoforms 1 and 2. Interacts with NRBP1.

The protein resides in the nucleus. The protein localises to the cytoplasm. It localises to the cell projection. Its subcellular location is the dendrite. It is found in the synapse. Its function is as follows. Binds DNA and acts as a transcriptional repressor. Involved in the regulation of systematic glucose homeostasis and insulin sensitivity, via transcriptional repression of downstream insulin signaling targets such as OBP2A/LCN13. Acts as a negative regulator of lipogenic gene expression in hepatocytes and thereby mediates the control of very low-density lipoprotein release. May play a role in neurite elongation and survival. The chain is TSC22 domain family protein 4 from Rattus norvegicus (Rat).